The chain runs to 732 residues: Eukaryotic translation initiation factor 3 subunit B (732 aa).

A sufficient for interaction with HCR1 and TIF32 region spans residues 1–94; that stretch reads MTTLESLKIE…LFIEMESVSA (94 aa). The interval 1 to 219 is sufficient for interaction with PIC8; the sequence is MTTLESLKIE…GVTSWGGPNF (219 aa). An RRM domain is found at 37–120; that stretch reads NFLVVDGAPV…HRLLVNSLND (84 aa). WD repeat units lie at residues 185-224, 237-280, 439-481, and 507-554; these read ARKN…RLKR, PTEK…LMKT, EMKD…KFFA, and VDQQ…KTLN.

The protein belongs to the eIF-3 subunit B family. Component of the eukaryotic translation initiation factor 3 (eIF-3) complex.

It is found in the cytoplasm. Its function is as follows. RNA-binding component of the eukaryotic translation initiation factor 3 (eIF-3) complex, which is involved in protein synthesis of a specialized repertoire of mRNAs and, together with other initiation factors, stimulates binding of mRNA and methionyl-tRNAi to the 40S ribosome. The eIF-3 complex specifically targets and initiates translation of a subset of mRNAs involved in cell proliferation. In Kluyveromyces lactis (strain ATCC 8585 / CBS 2359 / DSM 70799 / NBRC 1267 / NRRL Y-1140 / WM37) (Yeast), this protein is Eukaryotic translation initiation factor 3 subunit B.